The primary structure comprises 284 residues: Bifunctional protein FolD (284 aa).

NADP(+) contacts are provided by residues 164 to 166 (GRS) and Ser189.

It belongs to the tetrahydrofolate dehydrogenase/cyclohydrolase family. As to quaternary structure, homodimer.

The catalysed reaction is (6R)-5,10-methylene-5,6,7,8-tetrahydrofolate + NADP(+) = (6R)-5,10-methenyltetrahydrofolate + NADPH. The enzyme catalyses (6R)-5,10-methenyltetrahydrofolate + H2O = (6R)-10-formyltetrahydrofolate + H(+). Its pathway is one-carbon metabolism; tetrahydrofolate interconversion. Catalyzes the oxidation of 5,10-methylenetetrahydrofolate to 5,10-methenyltetrahydrofolate and then the hydrolysis of 5,10-methenyltetrahydrofolate to 10-formyltetrahydrofolate. The protein is Bifunctional protein FolD of Listeria welshimeri serovar 6b (strain ATCC 35897 / DSM 20650 / CCUG 15529 / CIP 8149 / NCTC 11857 / SLCC 5334 / V8).